A 171-amino-acid chain; its full sequence is Ribosome maturation factor RimP (171 aa).

Belongs to the RimP family.

The protein resides in the cytoplasm. Its function is as follows. Required for maturation of 30S ribosomal subunits. The chain is Ribosome maturation factor RimP from Anaeromyxobacter dehalogenans (strain 2CP-1 / ATCC BAA-258).